A 477-amino-acid chain; its full sequence is Glutamate--tRNA ligase (477 aa).

The 'HIGH' region signature appears at 8–18 (PSPTGTLHIGT). A 'KMSKS' region motif is present at residues 247–251 (KLSKR). ATP is bound at residue Lys-250.

Belongs to the class-I aminoacyl-tRNA synthetase family. Glutamate--tRNA ligase type 1 subfamily. As to quaternary structure, monomer.

The protein localises to the cytoplasm. The enzyme catalyses tRNA(Glu) + L-glutamate + ATP = L-glutamyl-tRNA(Glu) + AMP + diphosphate. In terms of biological role, catalyzes the attachment of glutamate to tRNA(Glu) in a two-step reaction: glutamate is first activated by ATP to form Glu-AMP and then transferred to the acceptor end of tRNA(Glu). This is Glutamate--tRNA ligase from Parasynechococcus marenigrum (strain WH8102).